Reading from the N-terminus, the 260-residue chain is MFDIGLNLTSPQFANDRDDVVARAFAAGVKGLLLTGTNLHESEHAQQLAQGYERCWSTAGVHPHDSSQWTDESAETLYKLAKTEEVVAIGECGLDFNRNFSTPVEQEAAFTAQLAIAAELEMPVFMHCRDAHERFLTLLEPWRDKLPGAVLHCFTGSRQEAVECLNRGLYLGITGWVCDERRGLELRELLPVIPADRLLVETDAPYLLPRDMKPKPASRRNEPAYLGHIVERIAHWRGEERQRLDAQTDENVRRLFGITF.

3 residues coordinate a divalent metal cation: glutamate 91, histidine 127, and histidine 152.

The protein belongs to the metallo-dependent hydrolases superfamily. TatD-type hydrolase family. TatD subfamily. In terms of assembly, monomer. It depends on Mg(2+) as a cofactor.

The protein localises to the cytoplasm. Functionally, 3'-5' exonuclease that prefers single-stranded DNA and RNA. May play a role in the H(2)O(2)-induced DNA damage repair. This chain is 3'-5' ssDNA/RNA exonuclease TatD, found in Enterobacter sp. (strain 638).